We begin with the raw amino-acid sequence, 346 residues long: MTIAVAMSGGTDSLFALVLLKEQGQQVCGLHARFIPPTGHDPVPDIRAMCDRLGVDLHVVDLTEAFEEHVVRPFMEDYMVGRTPNPCARCNATMKFGLLADAAAHVGAVHLATGHYARLLRHPRWGTVLQRGVDPAKDQSYFLSLVPHARLEKAVFPLGNWRKEAVRGELARRSIVPPLPSESQEICFVPDDDYRAFLKNRRVRLPGPGPIVTTRGRKIGSHAGLWQYTEGQRKGLGIAWHEPLYVVGKDMENNMLLVGGREALASPGCVAEEVNLLVPYEDWPAEVAVRIRYRQQPLSARVTLRDGRLYARFREPQPPAARGQVLAVYDMEHHVLGGGVILGPLP.

6–13 (AMSGGTDS) contacts ATP. The Nucleophile role is filled by C90. Residues C90 and C187 are joined by a disulfide bond. G114 is a binding site for ATP. An interaction with tRNA region spans residues 137-139 (KDQ). Residue C187 is the Cysteine persulfide intermediate of the active site. An interaction with tRNA region spans residues 292–293 (RY).

It belongs to the MnmA/TRMU family.

It is found in the cytoplasm. The enzyme catalyses S-sulfanyl-L-cysteinyl-[protein] + uridine(34) in tRNA + AH2 + ATP = 2-thiouridine(34) in tRNA + L-cysteinyl-[protein] + A + AMP + diphosphate + H(+). Its function is as follows. Catalyzes the 2-thiolation of uridine at the wobble position (U34) of tRNA, leading to the formation of s(2)U34. The polypeptide is tRNA-specific 2-thiouridylase MnmA (Nitratidesulfovibrio vulgaris (strain DP4) (Desulfovibrio vulgaris)).